Reading from the N-terminus, the 133-residue chain is Protein msa (133 aa).

Transmembrane regions (helical) follow at residues 3 to 23 (YLILSLVANLLVFGVLSAIGL), 27 to 47 (ILAAMMIVLVIPIMISGILFF), 55 to 75 (YIFFNIIFIDFYYYIYNVHLM), and 103 to 123 (FGFDEILFYTLYLLLILIVLY).

Its subcellular location is the cell membrane. Functionally, accessory element involved in the expression of sarA and several virulence factors. Modulates SarA production and/or function in a strain-dependent manner. Affects the transcription of the accessory gene regulator (agr) and genes encoding virulence factors including alpha toxin (hla) and protein A (spa). The polypeptide is Protein msa (msa) (Staphylococcus aureus (strain USA300)).